The primary structure comprises 757 residues: Endosialin (757 aa).

Residues 1–17 form the signal peptide; the sequence is MLLRLLLAWAAAGPTLG. The Extracellular portion of the chain corresponds to 18–687; sequence QDPWAAEPRA…EHSQRDDRWL (670 aa). One can recognise a C-type lectin domain in the interval 30 to 156; the sequence is GPSSCYALFP…CTLAVDGYLC (127 aa). O-linked (GalNAc...) threonine glycosylation occurs at Thr-60. The cysteines at positions 131 and 147 are disulfide-linked. One can recognise a Sushi domain in the interval 162–232; the sequence is GACPALQDEA…WSRAGPLCLG (71 aa). One can recognise an EGF-like; calcium-binding domain in the interval 312-351; it reads DTDECQIAGVCQQMCVNYVGGFECYCSEGHELEADGISCS. 3 cysteine pairs are disulfide-bonded: Cys-316/Cys-326, Cys-322/Cys-335, and Cys-337/Cys-350. O-linked (GalNAc...) threonine glycosylation is found at Thr-401, Thr-428, Thr-448, Thr-456, Thr-459, Thr-472, Thr-519, Thr-541, Thr-543, Thr-544, Thr-545, Thr-587, Thr-593, Thr-594, and Thr-595. Residues Ser-598 and Ser-601 are each glycosylated (O-linked (GalNAc...) serine). 2 O-linked (GalNAc...) threonine glycosylation sites follow: Thr-612 and Thr-619. Residues 618 to 627 are compositionally biased toward low complexity; it reads PTLLPSQSPT. The segment at 618-662 is disordered; sequence PTLLPSQSPTNQTSPISPTHPHSKAPQIPREDGPSPKLALWLPSP. O-linked (GalNAc...) serine glycosylation is found at Ser-623 and Ser-625. Residues Thr-627 and Thr-630 are each glycosylated (O-linked (GalNAc...) threonine). O-linked (GalNAc...) serine glycosylation occurs at Ser-631. O-linked (GalNAc...) threonine glycosylation occurs at Thr-636. The O-linked (GalNAc...) serine glycan is linked to Ser-640. The chain crosses the membrane as a helical span at residues 688 to 708; that stretch reads LVALLVPTCVFLVVLLALGIV. Residues 709–757 are Cytoplasmic-facing; sequence YCTRCGPHAPNKRITDCYRWVIHAGSKSPTEPMPPRGSLTGVQTCRTSV. The segment at 737–757 is disordered; it reads PTEPMPPRGSLTGVQTCRTSV. Ser-746 is modified (phosphoserine). The span at 748–757 shows a compositional bias: polar residues; the sequence is TGVQTCRTSV.

As to quaternary structure, interacts with PDGFRA; this interaction promotes PDGF receptor signaling pathway. Interacts with integrin beta-1/ITGB1. Interacts with insulin receptor/INSR; this interaction diminishes INSR autophosphorylation. Post-translationally, O-glycosylated with sialylated oligosaccharides. May be N-glycosylated. Expressed in tumor endothelial cells but absent or barely detectable in normal endothelial cells. Expressed in metastatic lesions of the liver and during angiogenesis of corpus luteum formation and wound healing. Expressed in vascular endothelial cells of malignant tumors but not in normal blood vessels. Expressed in stromal fibroblasts. Strongly expressed in pericytes. Expressed on stromal cells and cells with lymphoid morphology such a T-cells.

The protein localises to the membrane. Its function is as follows. Cell surface glycoprotein involved in various biological processes including angiogenesis, immune response modulation, and tissue remodeling and repair. Participates in pericyte proliferation through positive modulation of the PDGF receptor signaling pathway. Acts as a scaffold for factor X, triggering allosteric changes and the spatial re-alignment of factor X with the TF-factor VIIa complex, thereby enhancing coagulation activation. Modulates the insulin signaling pathway by interacting with insulin receptor/INSR and by diminishing its capacity to be autophosphorylated in response to insulin. Also regulates LPS-induced inflammatory response in macrophages by favoring the production of proinflammatory cytokines. In human, negatively regulates T-cell proliferation compared with stromal cells where it increases proliferation. This Homo sapiens (Human) protein is Endosialin (CD248).